The chain runs to 440 residues: Chromosome partition protein MukF (440 aa).

Positions 208 to 236 (LSETSGTLRELQDTLEAAGDKLQANLLRI) are leucine-zipper.

Belongs to the MukF family. In terms of assembly, interacts, and probably forms a ternary complex, with MukE and MukB via its C-terminal region. The complex formation is stimulated by calcium or magnesium. It is required for an interaction between MukE and MukB.

Its subcellular location is the cytoplasm. It localises to the nucleoid. Involved in chromosome condensation, segregation and cell cycle progression. May participate in facilitating chromosome segregation by condensation DNA from both sides of a centrally located replisome during cell division. Not required for mini-F plasmid partitioning. Probably acts via its interaction with MukB and MukE. Overexpression results in anucleate cells. It has a calcium binding activity. The protein is Chromosome partition protein MukF of Escherichia fergusonii (strain ATCC 35469 / DSM 13698 / CCUG 18766 / IAM 14443 / JCM 21226 / LMG 7866 / NBRC 102419 / NCTC 12128 / CDC 0568-73).